The primary structure comprises 784 residues: Receptor-like protein 38 (784 aa).

The first 30 residues, 1 to 30 (MIRSQSYCFLGITITIYFFFCLLPLPNTFA), serve as a signal peptide directing secretion. Residues 31–752 (SPPTQSLCRH…SELEEPVLNW (722 aa)) lie on the Extracellular side of the membrane. LRR repeat units lie at residues 109–133 (LQHLTHLDLSNCNLQGEIPSSIENL), 134–157 (SHLTHLDLSTNHLVGEVPASIGNL), 158–180 (NQLEYIDLRGNHLRGNIPTSFAN), 182–204 (TKLSLLDLHENNFTGGDIVLSNL), and 205–227 (TSLAILDLSSNHFKSFFSADLSG). N-linked (GlcNAc...) asparagine glycosylation is present at asparagine 132. N-linked (GlcNAc...) asparagine glycosylation is found at asparagine 180, asparagine 193, and asparagine 203. The LRR 6; degenerate repeat unit spans residues 228-251 (LHNLEQIFGNENSFVGLFPASLLK). LRR repeat units lie at residues 252–276 (ISSLDKIQLSQNQFEGPIDFGNTSS), 278–301 (SRLTMLDISHNNFIGRVPSSLSKL), 302–324 (VNLELLDLSHNNFRGLSPRSISK), 326–349 (VNLTSLDISYNKLEGQVPYFIWKP), 351–373 (NLQSVDLSHNSFFDLGKSVEVVN), 374–400 (GAKLVGLNLGSNSLQGPIPQWICNFRF), 402–422 (FFLDLSDNRFTGSIPQCLKNS), 423–446 (TDFNTLNLRNNSLSGFLPELCMDS), 447–470 (TMLRSLDVSYNNFVGKLPKSLMNC), and 472–496 (DMEFLNVRGNKIKDTFPFWLGSRKS). An N-linked (GlcNAc...) asparagine glycan is attached at asparagine 273. N-linked (GlcNAc...) asparagine glycosylation is present at asparagine 327. N-linked (GlcNAc...) asparagine glycans are attached at residues asparagine 421 and asparagine 432. An LRR 17; degenerate repeat occupies 497–518 (LMVLVLRSNAFYGPVYNSTTYL). Asparagine 513, asparagine 544, and asparagine 562 each carry an N-linked (GlcNAc...) asparagine glycan. The LRR 18 repeat unit spans residues 520–544 (FPRLSIIDISNNDFVGSLPQDYFAN). LRR repeat units follow at residues 608 to 632 (FRGFKVIDFSGNRFSGHIPRSIGLL), 633 to 656 (SELLHLNLSGNAFTGNIPPSLANI), 657 to 680 (TNLETLDLSRNNLSGEIPRSLGNL), and 682 to 705 (FLSNINFSHNHLQGFVPRSTQFGT). N-linked (GlcNAc...) asparagine glycosylation is found at asparagine 639, asparagine 655, asparagine 668, asparagine 679, asparagine 687, and asparagine 707. A helical transmembrane segment spans residues 753–773 (IAAAIAFGPGVFCGFVIGHIF). The Cytoplasmic portion of the chain corresponds to 774 to 784 (TSYKHLWFIAR).

Belongs to the RLP family.

The protein localises to the cell membrane. The polypeptide is Receptor-like protein 38 (Arabidopsis thaliana (Mouse-ear cress)).